Here is a 556-residue protein sequence, read N- to C-terminus: Arginine--tRNA ligase (556 aa).

Residues 132 to 142 (ANPTGDLHLGH) carry the 'HIGH' region motif.

It belongs to the class-I aminoacyl-tRNA synthetase family. As to quaternary structure, monomer.

It is found in the cytoplasm. It catalyses the reaction tRNA(Arg) + L-arginine + ATP = L-arginyl-tRNA(Arg) + AMP + diphosphate. This chain is Arginine--tRNA ligase, found in Listeria monocytogenes serovar 1/2a (strain ATCC BAA-679 / EGD-e).